A 361-amino-acid polypeptide reads, in one-letter code: Alcohol dehydrogenase 9 (361 aa).

Residues Cys51, Thr53, His73, Cys104, Cys107, Cys110, Cys118, and Cys167 each coordinate Zn(2+). Residues Thr53 and His73 each contribute to the an alcohol site. Residue Thr53 coordinates NAD(+). NAD(+)-binding positions include 192 to 197 (GLGGLG), Lys221, 278 to 280 (LGA), and Lys356.

This sequence belongs to the zinc-containing alcohol dehydrogenase family. Class-III subfamily. Homodimer. It depends on Zn(2+) as a cofactor.

This chain is Alcohol dehydrogenase 9, found in Catharanthus roseus (Madagascar periwinkle).